We begin with the raw amino-acid sequence, 335 residues long: Pyridoxal 5'-phosphate synthase subunit PdxS (335 aa).

D30 contributes to the D-ribose 5-phosphate binding site. K87 (schiff-base intermediate with D-ribose 5-phosphate) is an active-site residue. G159 lines the D-ribose 5-phosphate pocket. R171 is a binding site for D-glyceraldehyde 3-phosphate. D-ribose 5-phosphate contacts are provided by residues G257 and G278 to S279.

The protein belongs to the PdxS/SNZ family. As to quaternary structure, in the presence of PdxT, forms a dodecamer of heterodimers.

It catalyses the reaction aldehydo-D-ribose 5-phosphate + D-glyceraldehyde 3-phosphate + L-glutamine = pyridoxal 5'-phosphate + L-glutamate + phosphate + 3 H2O + H(+). It participates in cofactor biosynthesis; pyridoxal 5'-phosphate biosynthesis. Functionally, catalyzes the formation of pyridoxal 5'-phosphate from ribose 5-phosphate (RBP), glyceraldehyde 3-phosphate (G3P) and ammonia. The ammonia is provided by the PdxT subunit. Can also use ribulose 5-phosphate and dihydroxyacetone phosphate as substrates, resulting from enzyme-catalyzed isomerization of RBP and G3P, respectively. The polypeptide is Pyridoxal 5'-phosphate synthase subunit PdxS (Thermococcus gammatolerans (strain DSM 15229 / JCM 11827 / EJ3)).